The primary structure comprises 421 residues: Synaptotagmin-1 (421 aa).

Residues 1 to 57 lie on the Vesicular side of the membrane; the sequence is MVSASRPEALAAPVTTVATLVPHNATEPASPGEGKEDAFSKLKQKFMNELHKIPLPP. Residue Asn24 is glycosylated (N-linked (GlcNAc...) asparagine). The chain crosses the membrane as a helical span at residues 58 to 79; it reads WALIAIAIVAVLLVVTCCFCVC. Residues Cys74, Cys75, Cys77, Cys79, and Cys82 are each lipidated (S-palmitoyl cysteine). Topologically, residues 80-421 are cytoplasmic; the sequence is KKCLFKKKNK…EVDAMLAVKK (342 aa). Residues 112 to 141 form a disordered region; that stretch reads TMKDQALKDDDAETGLTDGEEKEEPKEEEK. The span at 121–133 shows a compositional bias: acidic residues; it reads DDAETGLTDGEEK. Phosphothreonine is present on Thr128. Positions 135–381 are phospholipid binding; it reads EPKEEEKLGK…AIGKVFVGYN (247 aa). Residues 141–260 enclose the C2 1 domain; sequence KLGKLQYSLD…DFGHVTEEWR (120 aa). Residues Leu171, Asp172, and Asp178 each contribute to the Ca(2+) site. The residue at position 229 (Tyr229) is a Phosphotyrosine. Ca(2+)-binding residues include Asp230, Phe231, Asp232, Ser235, Lys236, and Asp238. Residue Ser264 is modified to Phosphoserine. Residues 272-405 form the C2 2 domain; it reads KLGDICFSLR…NPRRPIAQWH (134 aa). Ca(2+)-binding residues include Asp303 and Asp309. Phosphoserine is present on residues Ser342 and Ser344. Asp363, Asp365, and Asp371 together coordinate Ca(2+).

This sequence belongs to the synaptotagmin family. As to quaternary structure, homotetramer. Heterodimer; heterodimerizes with SYT2 in presence of calcium. Interacts with SCAMP5. Interacts with STON2. Forms a complex with SV2B, syntaxin 1 and SNAP25. Interacts with SV2A, SV2B and SV2C. Interacts with RIMS1. Interacts with PRRT2. Interacts with DNAJC5 in a phosphorylation-dependent manner. Interacts (via N-terminus) with RAB3A. Interacts with SYT12. Interacts with calmodulin. Interacts with DNM1 (via C-terminal proline-rich domain (PRD)); this interaction facilitates vesicle fission during clathrin-mediated endocytosis (CME). Requires Ca(2+) as cofactor. Post-translationally, glycosylated. Expressed in the brain and adrenal medulla (at protein level).

It is found in the cytoplasmic vesicle. It localises to the secretory vesicle membrane. The protein resides in the secretory vesicle. The protein localises to the synaptic vesicle membrane. Its subcellular location is the chromaffin granule membrane. It is found in the cytoplasm. Its function is as follows. Calcium sensor that participates in triggering neurotransmitter release at the synapse. May have a regulatory role in the membrane interactions during trafficking of synaptic vesicles at the active zone of the synapse. It binds acidic phospholipids with a specificity that requires the presence of both an acidic head group and a diacyl backbone. A Ca(2+)-dependent interaction between synaptotagmin and putative receptors for activated protein kinase C has also been reported. It can bind to at least three additional proteins in a Ca(2+)-independent manner; these are neurexins, syntaxin and AP2. Plays a role in dendrite formation by melanocytes. The sequence is that of Synaptotagmin-1 from Mus musculus (Mouse).